The following is a 136-amino-acid chain: Small ribosomal subunit protein uS9 (136 aa).

Residues 111–136 (DARRTEPHKPSRSTKGPRAKRQKSYR) form a disordered region. Over residues 120 to 136 (PSRSTKGPRAKRQKSYR) the composition is skewed to basic residues.

The protein belongs to the universal ribosomal protein uS9 family.

This Methanocaldococcus jannaschii (strain ATCC 43067 / DSM 2661 / JAL-1 / JCM 10045 / NBRC 100440) (Methanococcus jannaschii) protein is Small ribosomal subunit protein uS9 (rps9).